The following is a 508-amino-acid chain: Photosystem II CP47 reaction center protein (508 aa).

The next 6 membrane-spanning stretches (helical) occupy residues 21–36 (SVHI…WAGS), 101–115 (IMFS…IWHW), 140–156 (GIHL…FGAF), 203–218 (IAAG…FHLS), 237–252 (VLSS…AFVV), and 457–472 (SFAL…HGAR).

It belongs to the PsbB/PsbC family. PsbB subfamily. PSII is composed of 1 copy each of membrane proteins PsbA, PsbB, PsbC, PsbD, PsbE, PsbF, PsbH, PsbI, PsbJ, PsbK, PsbL, PsbM, PsbT, PsbX, PsbY, PsbZ, Psb30/Ycf12, at least 3 peripheral proteins of the oxygen-evolving complex and a large number of cofactors. It forms dimeric complexes. Binds multiple chlorophylls. PSII binds additional chlorophylls, carotenoids and specific lipids. serves as cofactor.

The protein resides in the plastid. The protein localises to the chloroplast thylakoid membrane. In terms of biological role, one of the components of the core complex of photosystem II (PSII). It binds chlorophyll and helps catalyze the primary light-induced photochemical processes of PSII. PSII is a light-driven water:plastoquinone oxidoreductase, using light energy to abstract electrons from H(2)O, generating O(2) and a proton gradient subsequently used for ATP formation. In Guizotia abyssinica (Niger), this protein is Photosystem II CP47 reaction center protein.